A 379-amino-acid chain; its full sequence is Cobalt-precorrin-5B C(1)-methyltransferase (379 aa).

This sequence belongs to the CbiD family.

It catalyses the reaction Co-precorrin-5B + S-adenosyl-L-methionine = Co-precorrin-6A + S-adenosyl-L-homocysteine. The protein operates within cofactor biosynthesis; adenosylcobalamin biosynthesis; cob(II)yrinate a,c-diamide from sirohydrochlorin (anaerobic route): step 6/10. Its function is as follows. Catalyzes the methylation of C-1 in cobalt-precorrin-5B to form cobalt-precorrin-6A. In Salmonella typhimurium (strain LT2 / SGSC1412 / ATCC 700720), this protein is Cobalt-precorrin-5B C(1)-methyltransferase.